The primary structure comprises 364 residues: MQERHTEQDYRALLIADTPIIDVRAPIEFEQGAMPAAINLPLMDNDERAAVGTCYKQQGSDAALALGHKLVAGEIRQQRMYAWRAACLQNPQGILCCARGGQRSHIVQRWLHEAGIDYPLVEGGYKALRQTAIQATIELAQKPIVLIGGCTGSGKTLLVQQQPNGVDLEGLARHRGSAFGRTLQPQLSQASFENLLAAEMLKTDARQDLRLWVLEDESRMIGSNHLPECLRERMTQAAIAVVEDPFEIRLERLNEEYFLRMHHDFTHAYGDEQGWQEYCEYLHHGLSAIKRRLGLQRYNELAAQLDTALTTQLTTGSTDGHLAWLVPLLKEYYDPMYRYQLEKKAEKVVFRGEWAEVAVWVKAQ.

One can recognise a Rhodanese domain in the interval 14–137 (LIADTPIIDV…LRQTAIQATI (124 aa)). Catalysis depends on C97, which acts as the S-selanylcysteine intermediate.

Belongs to the SelU family. As to quaternary structure, monomer.

It carries out the reaction 5-methylaminomethyl-2-thiouridine(34) in tRNA + selenophosphate + (2E)-geranyl diphosphate + H2O + H(+) = 5-methylaminomethyl-2-selenouridine(34) in tRNA + (2E)-thiogeraniol + phosphate + diphosphate. The enzyme catalyses 5-methylaminomethyl-2-thiouridine(34) in tRNA + (2E)-geranyl diphosphate = 5-methylaminomethyl-S-(2E)-geranyl-thiouridine(34) in tRNA + diphosphate. The catalysed reaction is 5-methylaminomethyl-S-(2E)-geranyl-thiouridine(34) in tRNA + selenophosphate + H(+) = 5-methylaminomethyl-2-(Se-phospho)selenouridine(34) in tRNA + (2E)-thiogeraniol. It catalyses the reaction 5-methylaminomethyl-2-(Se-phospho)selenouridine(34) in tRNA + H2O = 5-methylaminomethyl-2-selenouridine(34) in tRNA + phosphate. Involved in the post-transcriptional modification of the uridine at the wobble position (U34) of tRNA(Lys), tRNA(Glu) and tRNA(Gln). Catalyzes the conversion of 2-thiouridine (S2U-RNA) to 2-selenouridine (Se2U-RNA). Acts in a two-step process involving geranylation of 2-thiouridine (S2U) to S-geranyl-2-thiouridine (geS2U) and subsequent selenation of the latter derivative to 2-selenouridine (Se2U) in the tRNA chain. This is tRNA 2-selenouridine synthase from Shigella flexneri serotype 5b (strain 8401).